The primary structure comprises 321 residues: Transaldolase (321 aa).

The active-site Schiff-base intermediate with substrate is the Lys-132.

This sequence belongs to the transaldolase family. Type 1 subfamily. In terms of assembly, homodimer.

It is found in the cytoplasm. It carries out the reaction D-sedoheptulose 7-phosphate + D-glyceraldehyde 3-phosphate = D-erythrose 4-phosphate + beta-D-fructose 6-phosphate. The protein operates within carbohydrate degradation; pentose phosphate pathway; D-glyceraldehyde 3-phosphate and beta-D-fructose 6-phosphate from D-ribose 5-phosphate and D-xylulose 5-phosphate (non-oxidative stage): step 2/3. Transaldolase is important for the balance of metabolites in the pentose-phosphate pathway. This is Transaldolase from Rhizobium etli (strain CIAT 652).